The following is a 501-amino-acid chain: Ribose import ATP-binding protein RbsA (501 aa).

2 ABC transporter domains span residues 5–241 (LQLK…VGRK) and 252–495 (APGD…VGKL). ATP is bound at residue 37 to 44 (GENGAGKS).

This sequence belongs to the ABC transporter superfamily. Ribose importer (TC 3.A.1.2.1) family. The complex is composed of an ATP-binding protein (RbsA), two transmembrane proteins (RbsC) and a solute-binding protein (RbsB).

Its subcellular location is the cell inner membrane. The catalysed reaction is D-ribose(out) + ATP + H2O = D-ribose(in) + ADP + phosphate + H(+). Part of the ABC transporter complex RbsABC involved in ribose import. Responsible for energy coupling to the transport system. This Escherichia coli (strain UTI89 / UPEC) protein is Ribose import ATP-binding protein RbsA.